The following is a 255-amino-acid chain: uncharacterized protein (255 aa).

A J domain is found at 4-72 (DPYSVLGVEK…KRRKHYDKTG (69 aa)). Composition is skewed to basic residues over residues 167 to 178 (FAPNEKKRKRRA) and 243 to 255 (TKPK…RSKE). Disordered stretches follow at residues 167 to 215 (FAPN…EEAL) and 230 to 255 (LISN…RSKE).

It belongs to the DnaJ family.

It localises to the nucleus. Its subcellular location is the nucleolus. This is an uncharacterized protein from Schizosaccharomyces pombe (strain 972 / ATCC 24843) (Fission yeast).